Here is a 416-residue protein sequence, read N- to C-terminus: Gamma-glutamyl phosphate reductase (416 aa).

It belongs to the gamma-glutamyl phosphate reductase family.

It is found in the cytoplasm. It catalyses the reaction L-glutamate 5-semialdehyde + phosphate + NADP(+) = L-glutamyl 5-phosphate + NADPH + H(+). It participates in amino-acid biosynthesis; L-proline biosynthesis; L-glutamate 5-semialdehyde from L-glutamate: step 2/2. In terms of biological role, catalyzes the NADPH-dependent reduction of L-glutamate 5-phosphate into L-glutamate 5-semialdehyde and phosphate. The product spontaneously undergoes cyclization to form 1-pyrroline-5-carboxylate. The chain is Gamma-glutamyl phosphate reductase from Salmonella agona (strain SL483).